We begin with the raw amino-acid sequence, 182 residues long: Crossover junction endodeoxyribonuclease RuvC (182 aa).

Residues D7, E69, and D141 contribute to the active site. D7, E69, and D141 together coordinate Mg(2+).

This sequence belongs to the RuvC family. Homodimer which binds Holliday junction (HJ) DNA. The HJ becomes 2-fold symmetrical on binding to RuvC with unstacked arms; it has a different conformation from HJ DNA in complex with RuvA. In the full resolvosome a probable DNA-RuvA(4)-RuvB(12)-RuvC(2) complex forms which resolves the HJ. It depends on Mg(2+) as a cofactor.

The protein resides in the cytoplasm. The enzyme catalyses Endonucleolytic cleavage at a junction such as a reciprocal single-stranded crossover between two homologous DNA duplexes (Holliday junction).. The RuvA-RuvB-RuvC complex processes Holliday junction (HJ) DNA during genetic recombination and DNA repair. Endonuclease that resolves HJ intermediates. Cleaves cruciform DNA by making single-stranded nicks across the HJ at symmetrical positions within the homologous arms, yielding a 5'-phosphate and a 3'-hydroxyl group; requires a central core of homology in the junction. The consensus cleavage sequence is 5'-(A/T)TT(C/G)-3'. Cleavage occurs on the 3'-side of the TT dinucleotide at the point of strand exchange. HJ branch migration catalyzed by RuvA-RuvB allows RuvC to scan DNA until it finds its consensus sequence, where it cleaves and resolves the cruciform DNA. The sequence is that of Crossover junction endodeoxyribonuclease RuvC from Delftia acidovorans (strain DSM 14801 / SPH-1).